Reading from the N-terminus, the 283-residue chain is Hydrogenase expression/formation protein HoxQ (283 aa).

The segment at 1–29 (MNDDLPILPPGFGPGSHGEEERPDCPSMP) is disordered.

This sequence belongs to the HupH/HyaF family.

In Azotobacter vinelandii, this protein is Hydrogenase expression/formation protein HoxQ (hoxQ).